We begin with the raw amino-acid sequence, 106 residues long: Urease subunit beta (106 aa).

Belongs to the urease beta subunit family. Heterotrimer of UreA (gamma), UreB (beta) and UreC (alpha) subunits. Three heterotrimers associate to form the active enzyme.

The protein resides in the cytoplasm. It carries out the reaction urea + 2 H2O + H(+) = hydrogencarbonate + 2 NH4(+). It functions in the pathway nitrogen metabolism; urea degradation; CO(2) and NH(3) from urea (urease route): step 1/1. The polypeptide is Urease subunit beta (Escherichia coli O157:H7).